Consider the following 411-residue polypeptide: 2-oxoglutarate-dependent dioxygenase AOP3 (411 aa).

The Fe2OG dioxygenase domain maps to 259–356 (GNASVGAKEA…RYAAALFSNP (98 aa)). Fe cation is bound by residues His-279, Asp-281, and His-336. 2-oxoglutarate is bound at residue Arg-347.

The protein belongs to the iron/ascorbate-dependent oxidoreductase family. Requires Fe(2+) as cofactor. As to expression, not expressed.

2-oxoglutarate-dependent dioxygenase involved in glucosinolates biosynthesis. Catalyzes the conversion of methylsulfinylalkyl glucosinolates to hydroxyalkyl glucosinolates. The protein is 2-oxoglutarate-dependent dioxygenase AOP3 (AOP3) of Arabidopsis thaliana (Mouse-ear cress).